The following is a 137-amino-acid chain: Diacylglycerol kinase (137 aa).

E42 contacts a divalent metal cation. Helical transmembrane passes span 49–67 and 73–89; these read LIAFAAAMIAFIIVGATFF and AILFLLMMAFEAINTAI. Residue E83 is the Proton acceptor of the active site. E90 is a binding site for a divalent metal cation. The helical transmembrane segment at 112–132 threads the bilayer; sequence SFACLCLIVANGVYAAYVVIF.

It belongs to the bacterial diacylglycerol kinase family. Mg(2+) is required as a cofactor.

It is found in the cell inner membrane. The enzyme catalyses a 1,2-diacyl-sn-glycerol + ATP = a 1,2-diacyl-sn-glycero-3-phosphate + ADP + H(+). Functionally, catalyzes the ATP-dependent phosphorylation of sn-l,2-diacylglycerol (DAG) to phosphatidic acid. Involved in the recycling of diacylglycerol produced as a by-product during membrane-derived oligosaccharide (MDO) biosynthesis. The sequence is that of Diacylglycerol kinase (dgkA) from Sinorhizobium sp.